The sequence spans 90 residues: Small ribosomal subunit protein bS20 (90 aa).

Residues 1 to 11 (MANIKSSEKDI) are compositionally biased toward basic and acidic residues. 2 disordered regions span residues 1-29 (MANI…SRLR) and 69-90 (SKNA…SAAA).

It belongs to the bacterial ribosomal protein bS20 family.

In terms of biological role, binds directly to 16S ribosomal RNA. This Leptospira borgpetersenii serovar Hardjo-bovis (strain L550) protein is Small ribosomal subunit protein bS20.